Reading from the N-terminus, the 66-residue chain is Large ribosomal subunit protein bL33c (66 aa).

Belongs to the bacterial ribosomal protein bL33 family.

It is found in the plastid. The protein resides in the chloroplast. The protein is Large ribosomal subunit protein bL33c of Brachypodium distachyon (Purple false brome).